The chain runs to 263 residues: uncharacterized protein (263 aa).

31–38 (GPTGSGKT) serves as a coordination point for ATP.

It belongs to the CbbQ/NirQ/NorQ/GpvN family.

This is an uncharacterized protein from Staphylococcus aureus (strain NCTC 8325 / PS 47).